The following is a 144-amino-acid chain: 3-dehydroquinate dehydratase (144 aa).

Tyr-24 serves as the catalytic Proton acceptor. The substrate site is built by Asn-73, His-79, and Asp-86. Catalysis depends on His-99, which acts as the Proton donor. Residues 100-101 and Arg-110 each bind substrate; that span reads LS.

It belongs to the type-II 3-dehydroquinase family. As to quaternary structure, homododecamer.

The enzyme catalyses 3-dehydroquinate = 3-dehydroshikimate + H2O. It functions in the pathway metabolic intermediate biosynthesis; chorismate biosynthesis; chorismate from D-erythrose 4-phosphate and phosphoenolpyruvate: step 3/7. Its function is as follows. Catalyzes a trans-dehydration via an enolate intermediate. The chain is 3-dehydroquinate dehydratase from Shewanella sp. (strain MR-4).